Here is a 246-residue protein sequence, read N- to C-terminus: MATDVTETPAPLVDAAPEAPADAPAAPAADANAAKAKKATAPKKRASPTHLPYAEMVSEAITSLKERTGSSSYAIAKFVEDKHKAKLPPNFRKLLNVQLKKLVAGGKLTKVKNSYKLSSATKPNPKPKAAPKKPKTGAKKPKAAAKPKAKTPAKAKPATKPKPAAKPKAVVKPKTPAKPKAKPAAKAKPKTAGAKPKPLAKKAGRAKAAKTSAKDTPGKKAPAKKAAPSKKAATPVRKAPSRKAKK.

Disordered regions lie at residues 1 to 51 (MATD…PTHL) and 105 to 246 (GGKL…KAKK). The span at 9–34 (PAPLVDAAPEAPADAPAAPAADANAA) shows a compositional bias: low complexity. Residues 35–47 (KAKKATAPKKRAS) show a composition bias toward basic residues. The H15 domain occupies 49-119 (THLPYAEMVS…KVKNSYKLSS (71 aa)). 2 stretches are compositionally biased toward basic residues: residues 129–189 (AAPK…KAKP) and 198–208 (PLAKKAGRAKA). A compositionally biased stretch (low complexity) spans 224–235 (KKAAPSKKAATP).

Belongs to the histone H1/H5 family.

It is found in the nucleus. Its subcellular location is the chromosome. Functionally, histones H1 are necessary for the condensation of nucleosome chains into higher-order structures. The chain is Histone H1 from Zea mays (Maize).